The sequence spans 282 residues: Peptidoglycan-recognition protein LD (282 aa).

The interval 1–29 is disordered; that stretch reads MDSSHIAVRVARRSPSPAAVSQSSYGSLG. Over 1-88 the chain is Cytoplasmic; it reads MDSSHIAVRV…RRNPTLHEDC (88 aa). The helical transmembrane segment at 89–111 threads the bilayer; that stretch reads FNWRSVGLLVMCASALALAAYLL. Residues 112 to 282 are Extracellular-facing; sequence WRQTQTPDFG…PHYASHQTSK (171 aa). An intrachain disulfide couples Cys162 to Cys166. Asn222 is a glycosylation site (N-linked (GlcNAc...) asparagine).

The protein belongs to the N-acetylmuramoyl-L-alanine amidase 2 family. As to expression, expressed in uninduced hemocytes and mbn-2 cells.

It is found in the cell membrane. Functionally, peptidoglycan-recognition protein probably involved in innate immunity by binding to peptidoglycans (PGN) of bacteria and activating the immune response. The sequence is that of Peptidoglycan-recognition protein LD (PGRP-LD) from Drosophila melanogaster (Fruit fly).